The primary structure comprises 317 residues: Olfactory receptor 2F2 (317 aa).

At 1 to 25 the chain is on the extracellular side; sequence MEIDNQTWVREFILLGLSSDWCTQI. A glycan (N-linked (GlcNAc...) asparagine) is linked at N5. A helical membrane pass occupies residues 26-49; the sequence is SLFSLFLVTYLMTVLGNCLIVLLI. The Cytoplasmic portion of the chain corresponds to 50–57; that stretch reads RLDSRLHT. The helical transmembrane segment at 58 to 79 threads the bilayer; the sequence is PMYFFLTNLSLVDVSYATSVVP. The Extracellular segment spans residues 80-100; the sequence is QLLAHFLAEHKAIPFQSCAAQ. The cysteines at positions 97 and 189 are disulfide-linked. A helical transmembrane segment spans residues 101 to 120; the sequence is LFFSLALGGIEFVLLAVMAY. The Cytoplasmic segment spans residues 121 to 139; it reads DRHVAVSDRLRYSAIMHGG. A helical membrane pass occupies residues 140 to 158; sequence LCARLAITSWVSGSINSLV. The Extracellular portion of the chain corresponds to 159-195; sequence QTAITFQLPMCTNKFIDHISCELLAVVRLACVDTSSN. The chain crosses the membrane as a helical span at residues 196–219; that stretch reads EAAIMVSSIVLLMTPFCLVLLSYI. Over 220 to 236 the chain is Cytoplasmic; it reads RIISTILKIQSREGRKK. A helical membrane pass occupies residues 237 to 259; the sequence is AFHTCASHLTVVALCYGTTIFTY. Over 260-272 the chain is Extracellular; that stretch reads IQPHSGPSVLQEK. A helical membrane pass occupies residues 273-292; it reads LISVFYAIVMPLLNPVIYSL. The Cytoplasmic portion of the chain corresponds to 293 to 317; sequence RNKEVKGAWHKLLEKFSGLTSKLGT.

It belongs to the G-protein coupled receptor 1 family.

The protein localises to the cell membrane. Functionally, odorant receptor. The protein is Olfactory receptor 2F2 (OR2F2) of Homo sapiens (Human).